A 329-amino-acid polypeptide reads, in one-letter code: GTPase Obg (329 aa).

One can recognise an Obg domain in the interval Met1–Leu159. Residues Ala160–Gly328 form the OBG-type G domain. ATP-binding positions include Gly166–Ser173, Phe191–Val195, Asp213–Gly216, Asn280–Glu283, and Ser309–Val311. The Mg(2+) site is built by Ser173 and Thr193.

This sequence belongs to the TRAFAC class OBG-HflX-like GTPase superfamily. OBG GTPase family. As to quaternary structure, monomer. Mg(2+) serves as cofactor.

It is found in the cytoplasm. Functionally, an essential GTPase which binds GTP, GDP and possibly (p)ppGpp with moderate affinity, with high nucleotide exchange rates and a fairly low GTP hydrolysis rate. Plays a role in control of the cell cycle, stress response, ribosome biogenesis and in those bacteria that undergo differentiation, in morphogenesis control. This is GTPase Obg from Synechococcus sp. (strain WH7803).